Reading from the N-terminus, the 325-residue chain is Palmitoyltransferase PFA3 (325 aa).

The Cytoplasmic portion of the chain corresponds to methionine 1 to proline 8. The chain crosses the membrane as a helical span at residues isoleucine 9–leucine 29. A topological domain (lumenal) is located at residue lysine 30. A helical membrane pass occupies residues valine 31–leucine 51. The Cytoplasmic segment spans residues tyrosine 52 to lysine 147. The DHHC domain occupies arginine 104–leucine 154. Residues phenylalanine 148–threonine 168 traverse the membrane as a helical segment. At tryptophan 169–histidine 188 the chain is on the lumenal side. A helical membrane pass occupies residues leucine 189–phenylalanine 209. The Cytoplasmic segment spans residues asparagine 210–glutamine 325.

This sequence belongs to the DHHC palmitoyltransferase family. PFA3 subfamily. Post-translationally, autopalmitoylated.

The protein resides in the vacuole membrane. It catalyses the reaction L-cysteinyl-[protein] + hexadecanoyl-CoA = S-hexadecanoyl-L-cysteinyl-[protein] + CoA. Palmitoyltransferase specific for VAC8. Palmitoylates VAC8 at one or more of its N-terminal cysteine residues, which is required for its proper membrane localization. This is Palmitoyltransferase PFA3 (PFA3) from Eremothecium gossypii (strain ATCC 10895 / CBS 109.51 / FGSC 9923 / NRRL Y-1056) (Yeast).